Consider the following 554-residue polypeptide: Valerianol synthase TPS1C (554 aa).

Residues Asp307 and Asp311 each contribute to the Mg(2+) site. The short motif at 326 to 330 (VQRWD) is the DDXXD motif element. Residues Asp452, Ser456, and Glu460 each contribute to the Mg(2+) site.

This sequence belongs to the terpene synthase family. The cofactor is Mg(2+).

The enzyme catalyses (2E,6E)-farnesyl diphosphate + H2O = valerianol + diphosphate. Its pathway is secondary metabolite biosynthesis; terpenoid biosynthesis. Terpene synthase that catalyzes the biosynthesis of the terpene valerianol, which is a volatile compound of floral scent. This Camellia hiemalis (Camellia) protein is Valerianol synthase TPS1C.